The following is a 265-amino-acid chain: Formyltransferase/hydrolase complex Fhc subunit C (265 aa).

The protein belongs to the FwdC/FmdC family. In terms of assembly, octaheteromer. Part of the formyltransferase/hydrolase complex fhc; composed of FhcA, FhcB, FhcC and FhcD.

It is found in the cytoplasm. It participates in one-carbon metabolism; formaldehyde degradation; formate from formaldehyde (H(4)MPT route): step 4/5. Its function is as follows. Involved in the transformation of 5-formyl tetrahydromethanopterin (5-formyl-H(4)MPT) to methanofuran (MFR) and formate via the formylmethanofuran (formyl-MFR). The sequence is that of Formyltransferase/hydrolase complex Fhc subunit C (fhcC) from Methylorubrum extorquens (strain ATCC 14718 / DSM 1338 / JCM 2805 / NCIMB 9133 / AM1) (Methylobacterium extorquens).